Here is a 174-residue protein sequence, read N- to C-terminus: MAPPPPSPPPVSLKVSLLLLRVLTGVFLVIALIILSTNSVTIVSQGSALKFHFKDVYAYRYMLSAAVIGLLYAVIQLFFTISEFATGMKNPFNYQLDFYGDKLISYLVATGSAAGFGVSKDLKDAFIALVALDSTDPVDKFFSRGYASASLLLFSFICLAVLSVFSSLAIAKRN.

The Cytoplasmic portion of the chain corresponds to 1 to 14 (MAPPPPSPPPVSLK). The chain crosses the membrane as a helical span at residues 15–35 (VSLLLLRVLTGVFLVIALIIL). Over 36-60 (STNSVTIVSQGSALKFHFKDVYAYR) the chain is Extracellular. The chain crosses the membrane as a helical span at residues 61 to 81 (YMLSAAVIGLLYAVIQLFFTI). Over 82–150 (SEFATGMKNP…FFSRGYASAS (69 aa)) the chain is Cytoplasmic. The helical transmembrane segment at 151-171 (LLLFSFICLAVLSVFSSLAIA) threads the bilayer. Over 172 to 174 (KRN) the chain is Extracellular.

This sequence belongs to the Casparian strip membrane proteins (CASP) family. As to quaternary structure, homodimer and heterodimers.

It is found in the cell membrane. This Arabidopsis lyrata subsp. lyrata (Lyre-leaved rock-cress) protein is CASP-like protein 4D2.